The chain runs to 718 residues: D-(-)-3-hydroxybutyrate oligomer hydrolase (718 aa).

Serine 320 acts as the Charge relay system in catalysis.

This sequence belongs to the D-(-)-3-hydroxybutyrate oligomer hydrolase family.

The protein resides in the cytoplasm. The catalysed reaction is (3R)-hydroxybutanoate dimer + H2O = 2 (R)-3-hydroxybutanoate + H(+). It participates in lipid metabolism; butanoate metabolism. Inhibited by diisopropylfluorophosphate (DFP). Participates in the degradation of poly-3-hydroxybutyrate (PHB). It works downstream of poly(3-hydroxybutyrate) depolymerase, hydrolyzing D(-)-3-hydroxybutyrate oligomers of various length (3HB-oligomers) into 3HB-monomers. Seems to have also poly(3-hydroxybutyrate) depolymerase activity since it is able to release 3HB-monomers from artificial amorphous PHB. The polypeptide is D-(-)-3-hydroxybutyrate oligomer hydrolase (phaZ2) (Cupriavidus necator (strain ATCC 17699 / DSM 428 / KCTC 22496 / NCIMB 10442 / H16 / Stanier 337) (Ralstonia eutropha)).